A 483-amino-acid chain; its full sequence is Bifunctional pantoate ligase/cytidylate kinase (483 aa).

Positions 1–246 are pantoate--beta-alanine ligase; the sequence is MPTMGALHAG…CGSTRLIDHA (246 aa). 4–11 contributes to the ATP binding site; sequence MGALHAGH. His11 serves as the catalytic Proton donor. Gln34 lines the (R)-pantoate pocket. A beta-alanine-binding site is contributed by Gln34. 124-127 provides a ligand contact to ATP; it reads GEKD. Position 130 (Gln130) interacts with (R)-pantoate. Residues Val153 and 161–164 contribute to the ATP site; that span reads LSSR. The cytidylate kinase stretch occupies residues 247–483; that stretch reads FLMTRQPLVA…AEEAWPTPQR (237 aa).

In the N-terminal section; belongs to the pantothenate synthetase family. The protein in the C-terminal section; belongs to the cytidylate kinase family. Type 1 subfamily.

It is found in the cytoplasm. The catalysed reaction is (R)-pantoate + beta-alanine + ATP = (R)-pantothenate + AMP + diphosphate + H(+). It carries out the reaction CMP + ATP = CDP + ADP. The enzyme catalyses dCMP + ATP = dCDP + ADP. Its pathway is cofactor biosynthesis; (R)-pantothenate biosynthesis; (R)-pantothenate from (R)-pantoate and beta-alanine: step 1/1. In terms of biological role, catalyzes the condensation of pantoate with beta-alanine in an ATP-dependent reaction via a pantoyl-adenylate intermediate. Catalyzes the transfer of a phosphate group from ATP to either CMP or dCMP to form CDP or dCDP and ADP, respectively. This Synechococcus sp. (strain CC9902) protein is Bifunctional pantoate ligase/cytidylate kinase.